A 484-amino-acid chain; its full sequence is Probable endopeptidase p60 (484 aa).

The signal sequence occupies residues 1 to 27 (MNMKKATIAATAGIAVTAFAAPTIASA). In terms of domain architecture, LysM 1 spans 28-71 (STVVVEAGDTLWGIAQSKGTTVDAIKKANNLTTDKIVPGQKLQV). Positions 80-144 (KTEKSVSATW…VNGKYLTDKA (65 aa)) constitute an SH3b domain. The disordered stretch occupies residues 150-192 (APTQEVKKETTTQQAAPAAETKTEVKQTTQATTPAPKVAETKE). The span at 160–169 (TTQQAAPAAE) shows a compositional bias: low complexity. A LysM 2 domain is found at 201–244 (TTHAVKSGDTIWALSVKYGVSVQDIMSWNNLSSSSIYVGQKLAI). A disordered region spans residues 254–367 (KAEVKTEAPA…QGSSNNNSNS (114 aa)). Low complexity-rich tracts occupy residues 273 to 282 (KENTNTNTAT) and 289 to 367 (ATQQ…NSNS). Residues 311–355 (TNTNANKTNTNTNTNTNTNNTNTNTPSKNTNTNSNTNTNTNSNTN) are 19 X 2 AA tandem repeats of T-N. Residues 366–484 (NSSASAIIAE…GKYLVGFGRV (119 aa)) enclose the NlpC/P60 domain. The active-site Nucleophile is the Cys-396. Catalysis depends on His-446, which acts as the Proton acceptor. Asn-458 is an active-site residue.

It belongs to the peptidase C40 family.

Its subcellular location is the cell surface. It localises to the secreted. Its function is as follows. This major extracellular protein may be involved in the invasion of non-professional phagocytic cells by Listeria. This Listeria monocytogenes serovar 1/2a (strain ATCC BAA-679 / EGD-e) protein is Probable endopeptidase p60 (iap).